A 374-amino-acid polypeptide reads, in one-letter code: Putative phosphoserine aminotransferase (374 aa).

Residue arginine 48 coordinates L-glutamate. Pyridoxal 5'-phosphate contacts are provided by residues 82 to 83 (AT), phenylalanine 106, threonine 152, aspartate 174, and glutamine 197. At lysine 198 the chain carries N6-(pyridoxal phosphate)lysine. Pyridoxal 5'-phosphate is bound at residue 249 to 250 (NT).

Belongs to the class-V pyridoxal-phosphate-dependent aminotransferase family. SerC subfamily. As to quaternary structure, homodimer. Pyridoxal 5'-phosphate serves as cofactor.

Its subcellular location is the cytoplasm. It carries out the reaction O-phospho-L-serine + 2-oxoglutarate = 3-phosphooxypyruvate + L-glutamate. The enzyme catalyses 4-(phosphooxy)-L-threonine + 2-oxoglutarate = (R)-3-hydroxy-2-oxo-4-phosphooxybutanoate + L-glutamate. It participates in amino-acid biosynthesis; L-serine biosynthesis; L-serine from 3-phospho-D-glycerate: step 2/3. Its pathway is cofactor biosynthesis; pyridoxine 5'-phosphate biosynthesis; pyridoxine 5'-phosphate from D-erythrose 4-phosphate: step 3/5. Functionally, catalyzes the reversible conversion of 3-phosphohydroxypyruvate to phosphoserine and of 3-hydroxy-2-oxo-4-phosphonooxybutanoate to phosphohydroxythreonine. This chain is Putative phosphoserine aminotransferase, found in Mycobacterium avium (strain 104).